The chain runs to 531 residues: Type 2 DNA topoisomerase 6 subunit B (531 aa).

Residues Asn-42, Asp-76, 97–98 (SK), 106–113 (GMYGLGVK), and Lys-427 each bind ATP.

It belongs to the TOP6B family. As to quaternary structure, homodimer. Heterotetramer of two Top6A and two Top6B chains.

The enzyme catalyses ATP-dependent breakage, passage and rejoining of double-stranded DNA.. Relaxes both positive and negative superturns and exhibits a strong decatenase activity. This chain is Type 2 DNA topoisomerase 6 subunit B, found in Metallosphaera sedula (strain ATCC 51363 / DSM 5348 / JCM 9185 / NBRC 15509 / TH2).